The following is a 680-amino-acid chain: Lipase 1 (680 aa).

Positions 1-34 (MKSQNKYSIRKFSVGASSILIATLLFLSGGQAQA) are cleaved as a signal peptide. The propeptide occupies 35 to 290 (AEKQVNMGNS…AKAKDDQTNK (256 aa)). Positions 82–259 (KNLHNDKTIS…PTKDNDKKNG (178 aa)) are disordered. A compositionally biased stretch (basic and acidic residues) spans 84–112 (LHNDKTISEENHRKTDDLNKDQLKDDKKS). Residues 125-138 (KNNNANPSDVNQGL) are compositionally biased toward polar residues. Residues 148 to 170 (SKVASQQQSKEADNSQDSNANNN) are compositionally biased toward low complexity. Positions 204–223 (QPQQNNQANDKITNYNFNNE) are enriched in polar residues. Residues 224–234 (QEVKPQKDEKT) show a composition bias toward basic and acidic residues. Residues 235–246 (LSVSDLKNNQKS) show a composition bias toward polar residues. The active-site Nucleophile is Ser408. The active-site Charge relay system is the Asp600. A Ca(2+)-binding site is contributed by Asp638. His639 serves as the catalytic Charge relay system. Ca(2+) contacts are provided by Asp641, Asp646, and Asp649.

This sequence belongs to the AB hydrolase superfamily. Lipase family.

Its subcellular location is the secreted. The catalysed reaction is a triacylglycerol + H2O = a diacylglycerol + a fatty acid + H(+). The sequence is that of Lipase 1 (lip1) from Staphylococcus aureus (strain MSSA476).